Reading from the N-terminus, the 1118-residue chain is Cytospin-A (1118 aa).

Disordered stretches follow at residues 1–157 (MKKS…DGQI) and 198–221 (GGKE…PHVS). 2 stretches are compositionally biased toward polar residues: residues 57-102 (NPTS…TKET) and 112-123 (SRASANKKQSAA). A compositionally biased stretch (basic and acidic residues) spans 144–153 (SESRMSKSKS). Residues 204 to 215 (EGPEEEEEEEEE) are compositionally biased toward acidic residues. Positions 225–264 (AADVESTLILLQEQNQAIREELNLLKSENRMLKDRLNALG) form a coiled coil. Residues 289–379 (AGSGQSDGGG…RRGSSGNASE (91 aa)) are disordered. A compositionally biased stretch (low complexity) spans 343–363 (SSDDALDAPSGASSSSESECA). Coiled coils occupy residues 384-438 (CLTE…MDSL) and 475-796 (GRYM…RGRV). 3 disordered regions span residues 771–790 (QEKN…RKQD), 837–876 (FDSA…PPAA), and 920–1001 (SAAS…ERKD). Positions 838–855 (DSASQGPPSNGASVTPTV) are enriched in polar residues. Residues 861-872 (PRTPLSPSPMKT) show a composition bias toward pro residues. A compositionally biased stretch (polar residues) spans 930 to 945 (QRVSNMDSTKTISVSR). A compositionally biased stretch (basic and acidic residues) spans 946–956 (RSSEEMKRDMS). The span at 961–986 (ASSTSLMAMSAASAPLSLSSSSPTAS) shows a compositional bias: low complexity. The 106-residue stretch at 1012-1117 (GSKRNALLKW…YVTAIYKYFE (106 aa)) folds into the Calponin-homology (CH) domain.

The protein belongs to the cytospin-A family. As to quaternary structure, may interact with both microtubules and actin cytoskeleton.

It localises to the cytoplasm. It is found in the cytoskeleton. Its subcellular location is the spindle. The protein localises to the cell junction. The protein resides in the gap junction. In terms of biological role, involved in cytokinesis and spindle organization. May play a role in actin cytoskeleton organization and microtubule stabilization and hence required for proper cell adhesion and migration. The polypeptide is Cytospin-A (specc1l) (Takifugu rubripes (Japanese pufferfish)).